A 214-amino-acid chain; its full sequence is Putative 3-methyladenine DNA glycosylase (214 aa).

It belongs to the DNA glycosylase MPG family.

This chain is Putative 3-methyladenine DNA glycosylase, found in Mycobacterium leprae (strain Br4923).